A 317-amino-acid chain; its full sequence is MPNLKSIRDRISTVKNTKKITEAMRLVAAAKVRRAQEQVTATRPFADRLAQVLYGLQARLKFEEVELPLLQERALRKVCLLVVTGDRGLCGAYNSSVIKRAEERSNELKAKGIDYTFVLVGRKAIQYFQRRDQPIEATYGGLEQIPTAQEASEIADELLSLYLSEEVDHVELIYTRFISLVNSRPVVQTLLPLDPDALVVAEEDEVFRLTTRGGQFQVERERMERGTPQEMPSDMIFEQNPIQILDALLPLYLNNQLLRALQESAASELAARMTAMNNASDNASELIGTLTLSYNKARQAAITQELLEVVGGAEALN.

It belongs to the ATPase gamma chain family. As to quaternary structure, F-type ATPases have 2 components, CF(1) - the catalytic core - and CF(0) - the membrane proton channel. CF(1) has five subunits: alpha(3), beta(3), gamma(1), delta(1), epsilon(1). CF(0) has three main subunits: a, b and c.

It is found in the cellular thylakoid membrane. In terms of biological role, produces ATP from ADP in the presence of a proton gradient across the membrane. The gamma chain is believed to be important in regulating ATPase activity and the flow of protons through the CF(0) complex. The polypeptide is ATP synthase gamma chain (Acaryochloris marina (strain MBIC 11017)).